We begin with the raw amino-acid sequence, 195 residues long: Translation initiation factor IF-3 (195 aa).

The disordered stretch occupies residues 158–195 (EQSEVQQRPKREGRNMIMFLSPRKTPLIKKEEDAKENN). A compositionally biased stretch (basic and acidic residues) spans 185–195 (IKKEEDAKENN).

Belongs to the IF-3 family. As to quaternary structure, monomer.

The protein resides in the cytoplasm. Its function is as follows. IF-3 binds to the 30S ribosomal subunit and shifts the equilibrium between 70S ribosomes and their 50S and 30S subunits in favor of the free subunits, thus enhancing the availability of 30S subunits on which protein synthesis initiation begins. The sequence is that of Translation initiation factor IF-3 from Prochlorococcus marinus (strain MIT 9515).